The following is a 662-amino-acid chain: 3',5'-cyclic-AMP phosphodiesterase, isoform F (662 aa).

Disordered stretches follow at residues 79 to 108 (VPAS…LSQG) and 207 to 245 (SAGQ…RLPT). Residues 80–98 (PASNKSRRPNQSSSASRSG) show a composition bias toward polar residues. The 330-residue stretch at 248-577 (VETPRENELG…DYYQSMIPPS (330 aa)) folds into the PDEase domain. The active-site Proton donor is His-324. Position 324-328 (324-328 (HNSLH)) interacts with 3',5'-cyclic AMP. The a divalent metal cation site is built by His-328, His-364, Asp-365, and Asp-482. 3',5'-cyclic AMP contacts are provided by Asp-365, Asp-482, and Gln-533. Acidic residues predominate over residues 599–616 (EESDQENLAELEEGDESG). The tract at residues 599–662 (EESDQENLAE…CQNQPQHGGM (64 aa)) is disordered. Low complexity predominate over residues 617–634 (GESTTTGTTGTTAASALS). A compositionally biased stretch (gly residues) spans 635 to 646 (GAGGGGGGGGGM). A compositionally biased stretch (polar residues) spans 652-662 (GCQNQPQHGGM).

It belongs to the cyclic nucleotide phosphodiesterase family. PDE4 subfamily. In terms of assembly, monomer. A divalent metal cation is required as a cofactor.

The catalysed reaction is 3',5'-cyclic AMP + H2O = AMP + H(+). The protein operates within purine metabolism; 3',5'-cyclic AMP degradation; AMP from 3',5'-cyclic AMP: step 1/1. In terms of biological role, hydrolyzes the second messenger cAMP, which is a key regulator of many important physiological processes. Vital for female fertility. Required for learning/memory. The sequence is that of 3',5'-cyclic-AMP phosphodiesterase, isoform F from Drosophila melanogaster (Fruit fly).